The following is a 158-amino-acid chain: Small ribosomal subunit protein uS9 (158 aa).

This sequence belongs to the universal ribosomal protein uS9 family.

The sequence is that of Small ribosomal subunit protein uS9 from Brucella melitensis biotype 1 (strain ATCC 23456 / CCUG 17765 / NCTC 10094 / 16M).